Here is an 84-residue protein sequence, read N- to C-terminus: U4-theraphotoxin-Hhn1a (84 aa).

The N-terminal stretch at 1-22 (MKVTLIAIPTCAAVLVLHTTAA) is a signal peptide. Positions 23–47 (EELEESQLMEVGMPDTELAAVDEER) are excised as a propeptide. 3 disulfide bridges follow: Cys-51/Cys-65, Cys-55/Cys-76, and Cys-70/Cys-81.

This sequence belongs to the neurotoxin 12 (Hwtx-2) family. 02 (Hwtx-2) subfamily. Expressed by the venom gland.

The protein resides in the secreted. Functionally, postsynaptic neurotoxin. This is U4-theraphotoxin-Hhn1a from Cyriopagopus hainanus (Chinese bird spider).